The chain runs to 303 residues: HTH-type transcriptional regulator LysG (303 aa).

The HTH lysR-type domain maps to 6 to 62; the sequence is LDGPQLAALAAVVELGSFDAAAERLHVTPSAVSQRIKSLEQQVGQVLVVREKPCRAT. The segment at residues 23 to 42 is a DNA-binding region (H-T-H motif); that stretch reads FDAAAERLHVTPSAVSQRIK.

It belongs to the LysR transcriptional regulatory family. Homodimer.

Its function is as follows. Positively regulates the expression of the exporter LysE and represses its own expression. This Mycobacterium bovis (strain ATCC BAA-935 / AF2122/97) protein is HTH-type transcriptional regulator LysG.